Reading from the N-terminus, the 239-residue chain is Pre-mRNA-splicing factor isy1 (239 aa).

Belongs to the ISY1 family. In terms of assembly, associated with the spliceosome.

The protein resides in the cytoplasm. The protein localises to the nucleus. Involved in pre-mRNA splicing. The polypeptide is Pre-mRNA-splicing factor isy1 (msp-7) (Neurospora crassa (strain ATCC 24698 / 74-OR23-1A / CBS 708.71 / DSM 1257 / FGSC 987)).